The chain runs to 290 residues: Thymidylate synthase (290 aa).

Arg31 is a dUMP binding site. His61 lines the (6R)-5,10-methylene-5,6,7,8-tetrahydrofolate pocket. 152-153 contacts dUMP; the sequence is RR. The Nucleophile role is filled by Cys172. DUMP-binding positions include 192–195, Asn203, and 233–235; these read RSAD and HIY. Asp195 serves as a coordination point for (6R)-5,10-methylene-5,6,7,8-tetrahydrofolate. Ala289 lines the (6R)-5,10-methylene-5,6,7,8-tetrahydrofolate pocket.

It belongs to the thymidylate synthase family. Bacterial-type ThyA subfamily. Homodimer.

Its subcellular location is the cytoplasm. It catalyses the reaction dUMP + (6R)-5,10-methylene-5,6,7,8-tetrahydrofolate = 7,8-dihydrofolate + dTMP. It participates in pyrimidine metabolism; dTTP biosynthesis. In terms of biological role, catalyzes the reductive methylation of 2'-deoxyuridine-5'-monophosphate (dUMP) to 2'-deoxythymidine-5'-monophosphate (dTMP) while utilizing 5,10-methylenetetrahydrofolate (mTHF) as the methyl donor and reductant in the reaction, yielding dihydrofolate (DHF) as a by-product. This enzymatic reaction provides an intracellular de novo source of dTMP, an essential precursor for DNA biosynthesis. This Psychrobacter cryohalolentis (strain ATCC BAA-1226 / DSM 17306 / VKM B-2378 / K5) protein is Thymidylate synthase.